Here is a 393-residue protein sequence, read N- to C-terminus: Acetylornithine aminotransferase (393 aa).

Pyridoxal 5'-phosphate is bound by residues 95–96 (GA) and Phe-127. Residue Arg-130 coordinates N(2)-acetyl-L-ornithine. 214-217 (DEVQ) serves as a coordination point for pyridoxal 5'-phosphate. Position 243 is an N6-(pyridoxal phosphate)lysine (Lys-243). Ser-271 is a N(2)-acetyl-L-ornithine binding site. Thr-272 serves as a coordination point for pyridoxal 5'-phosphate.

This sequence belongs to the class-III pyridoxal-phosphate-dependent aminotransferase family. ArgD subfamily. In terms of assembly, homodimer. Requires pyridoxal 5'-phosphate as cofactor.

It is found in the cytoplasm. The catalysed reaction is N(2)-acetyl-L-ornithine + 2-oxoglutarate = N-acetyl-L-glutamate 5-semialdehyde + L-glutamate. The protein operates within amino-acid biosynthesis; L-arginine biosynthesis; N(2)-acetyl-L-ornithine from L-glutamate: step 4/4. This chain is Acetylornithine aminotransferase, found in Nitrosomonas europaea (strain ATCC 19718 / CIP 103999 / KCTC 2705 / NBRC 14298).